The primary structure comprises 106 residues: MAHHHDHEHDHNHDERELITLVDDQGNETLFEILLTIDGQEEFGKNYVLLIPASAEEDENGEVEIQAYSYIENENGTEGDLQPIPEDATAEWDMIEEVFNSFMEEE.

It belongs to the UPF0473 family.

In Streptococcus suis (strain 98HAH33), this protein is UPF0473 protein SSU98_0068.